A 274-amino-acid polypeptide reads, in one-letter code: Large ribosomal subunit protein uL2 (274 aa).

2 disordered regions span residues 28-55 (APHA…RHVG) and 224-274 (VAMN…RRRK).

The protein belongs to the universal ribosomal protein uL2 family. In terms of assembly, part of the 50S ribosomal subunit. Forms a bridge to the 30S subunit in the 70S ribosome.

Its function is as follows. One of the primary rRNA binding proteins. Required for association of the 30S and 50S subunits to form the 70S ribosome, for tRNA binding and peptide bond formation. It has been suggested to have peptidyltransferase activity; this is somewhat controversial. Makes several contacts with the 16S rRNA in the 70S ribosome. In Pseudomonas putida (strain W619), this protein is Large ribosomal subunit protein uL2.